Consider the following 245-residue polypeptide: Complement C1q subcomponent subunit A (245 aa).

The N-terminal stretch at 1-22 (METSQGWLVACVLTMTLVWTVA) is a signal peptide. Positions 28 to 114 (APNGKDGAPG…NPGNIRDQPR (87 aa)) are disordered. In terms of domain architecture, Collagen-like spans 31–109 (GKDGAPGNPG…KGVKGNPGNI (79 aa)). Pro39 and Pro45 each carry 4-hydroxyproline. At Lys48 the chain carries 5-hydroxylysine. An O-linked (Gal...) hydroxylysine; alternate glycan is attached at Lys48. The residue at position 54 (Pro54) is a 4-hydroxyproline. Lys67 is modified (5-hydroxylysine). O-linked (Gal...) hydroxylysine; alternate glycosylation occurs at Lys67. 2 positions are modified to 4-hydroxyproline: Pro79 and Pro85. Low complexity predominate over residues 79 to 99 (PGNVGLPGPSGPLGDSGPQGL). Lys100 bears the 5-hydroxylysine mark. The O-linked (Gal...) hydroxylysine; alternate glycan is linked to Lys100. The C1q domain maps to 110–245 (RDQPRPAFSA…FSGFLIFPSA (136 aa)). Asn146 carries N-linked (GlcNAc...) asparagine glycosylation. Gln199 is a Ca(2+) binding site.

In terms of assembly, core component of the complement C1 complex, a calcium-dependent complex composed of 1 molecule of the C1Q subcomplex, 2 molecules of C1R and 2 molecules of C1S. The C1Q subcomplex is composed 18 subunits: 3 chains of C1QA, C1QB, and C1QC trimerize to form 6 collagen-like triple helices connected to six globular ligand-recognition modules (C1q domain). Interacts with CR1 (via Sushi 24 and Sushi 25 domains). Interacts (via C-terminus) with CD33; this interaction activates CD33 inhibitory motifs. In terms of processing, O-linked glycans are assumed to be the Glc-Gal disaccharides typically found as secondary modifications of hydroxylated lysines in collagen-like domains.

It is found in the secreted. The protein resides in the cell surface. With respect to regulation, the C1Q subcomplex is inhibited by sulfated molecules, such as triterpenoid sulfates, heparan sulfate, or chondroitin sulfates. Functionally, core component of the complement C1 complex, a multiprotein complex that initiates the classical pathway of the complement system, a cascade of proteins that leads to phagocytosis and breakdown of pathogens and signaling that strengthens the adaptive immune system. The classical complement pathway is initiated by the C1Q subcomplex of the C1 complex, which specifically binds IgG or IgM immunoglobulins complexed with antigens, forming antigen-antibody complexes on the surface of pathogens: C1QA, together with C1QB and C1QC, specifically recognizes and binds the Fc regions of IgG or IgM via its C1q domain. Immunoglobulin-binding activates the proenzyme C1R, which cleaves C1S, initiating the proteolytic cascade of the complement system. The C1Q subcomplex is activated by a hexamer of IgG complexed with antigens, while it is activated by a pentameric IgM. The C1Q subcomplex also recognizes and binds phosphatidylserine exposed on the surface of cells undergoing programmed cell death, possibly promoting activation of the complement system. This chain is Complement C1q subcomponent subunit A, found in Mus musculus (Mouse).